A 194-amino-acid chain; its full sequence is Small ribosomal subunit protein uS7 (194 aa).

The protein belongs to the universal ribosomal protein uS7 family. Part of the 30S ribosomal subunit.

Functionally, one of the primary rRNA binding proteins, it binds directly to 16S rRNA where it nucleates assembly of the head domain of the 30S subunit. Is located at the subunit interface close to the decoding center. The protein is Small ribosomal subunit protein uS7 of Sulfurisphaera tokodaii (strain DSM 16993 / JCM 10545 / NBRC 100140 / 7) (Sulfolobus tokodaii).